We begin with the raw amino-acid sequence, 490 residues long: Betaine aldehyde dehydrogenase (490 aa).

The K(+) site is built by Thr26, Ile27, and Asp93. 150 to 152 (GAW) provides a ligand contact to NAD(+). Lys162 serves as the catalytic Charge relay system. Residue 176 to 179 (KPSE) coordinates NAD(+). A K(+)-binding site is contributed by Val180. NAD(+) is bound at residue 230–233 (GVAS). Leu246 contributes to the K(+) binding site. The Proton acceptor role is filled by Glu252. NAD(+) contacts are provided by Gly254, Cys286, and Glu387. The active-site Nucleophile is the Cys286. Cysteine sulfenic acid (-SOH) is present on Cys286. The K(+) site is built by Lys457 and Gly460. The active-site Charge relay system is Glu464.

Belongs to the aldehyde dehydrogenase family. As to quaternary structure, dimer of dimers. K(+) serves as cofactor.

It catalyses the reaction betaine aldehyde + NAD(+) + H2O = glycine betaine + NADH + 2 H(+). It functions in the pathway amine and polyamine biosynthesis; betaine biosynthesis via choline pathway; betaine from betaine aldehyde: step 1/1. In terms of biological role, involved in the biosynthesis of the osmoprotectant glycine betaine. Catalyzes the irreversible oxidation of betaine aldehyde to the corresponding acid. The sequence is that of Betaine aldehyde dehydrogenase from Escherichia coli (strain SE11).